A 323-amino-acid chain; its full sequence is Olfactory receptor 52B2 (323 aa).

Over 1-27 the chain is Extracellular; it reads MSHTNVTIFHPAVFVLPGIPGLEAYHI. Asparagine 5 carries an N-linked (GlcNAc...) asparagine glycan. A helical transmembrane segment spans residues 28-48; that stretch reads WLSIPLCLIYITAVLGNSILI. The Cytoplasmic portion of the chain corresponds to 49-56; the sequence is VVIVMERN. A helical membrane pass occupies residues 57–77; the sequence is LHVPMYFFLSMLAVMDILLST. Residues 78–101 are Extracellular-facing; sequence TTVPKALAIFWLQAHNIAFDACVT. A disulfide bridge connects residues cysteine 99 and cysteine 191. The chain crosses the membrane as a helical span at residues 102–122; it reads QGFFVHMMFVGESAILLAMAF. Topologically, residues 123–141 are cytoplasmic; the sequence is DRFVAICAPLRYTTVLTWP. Residues 142-162 form a helical membrane-spanning segment; sequence VVGRIALAVITRSFCIIFPVI. Residues 163–198 lie on the Extracellular side of the membrane; sequence FLLKRLPFCLTNIVPHSYCEHIGVARLACADITVNI. The helical transmembrane segment at 199 to 219 threads the bilayer; the sequence is WYGFSVPIVMVILDVILIAVS. The Cytoplasmic portion of the chain corresponds to 220–239; that stretch reads YSLILRAVFRLPSQDARHKA. Residues 240–260 traverse the membrane as a helical segment; it reads LSTCGSHLCVILMFYVPSFFT. Topologically, residues 261–275 are extracellular; sequence LLTHHFGRNIPQHVH. Residues 276 to 296 traverse the membrane as a helical segment; sequence ILLANLYVAVPPMLNPIVYGV. The Cytoplasmic portion of the chain corresponds to 297–323; the sequence is KTKQIREGVAHRFFDIKTWCCTSPLGS.

This sequence belongs to the G-protein coupled receptor 1 family.

It is found in the cell membrane. Functionally, odorant receptor. This is Olfactory receptor 52B2 (OR52B2) from Homo sapiens (Human).